Here is a 355-residue protein sequence, read N- to C-terminus: Histidinol-phosphate aminotransferase (355 aa).

Lys218 carries the post-translational modification N6-(pyridoxal phosphate)lysine.

It belongs to the class-II pyridoxal-phosphate-dependent aminotransferase family. Histidinol-phosphate aminotransferase subfamily. In terms of assembly, homodimer. Pyridoxal 5'-phosphate is required as a cofactor.

The catalysed reaction is L-histidinol phosphate + 2-oxoglutarate = 3-(imidazol-4-yl)-2-oxopropyl phosphate + L-glutamate. The protein operates within amino-acid biosynthesis; L-histidine biosynthesis; L-histidine from 5-phospho-alpha-D-ribose 1-diphosphate: step 7/9. In Chlorobium limicola (strain DSM 245 / NBRC 103803 / 6330), this protein is Histidinol-phosphate aminotransferase.